A 739-amino-acid chain; its full sequence is Phosphoribosylformylglycinamidine synthase subunit PurL (739 aa).

The active site involves His-54. ATP contacts are provided by Tyr-57 and Lys-96. Glu-98 provides a ligand contact to Mg(2+). Residues 99–102 (SHNH) and Arg-121 each bind substrate. His-100 (proton acceptor) is an active-site residue. Asp-122 is a binding site for Mg(2+). Residue Gln-245 participates in substrate binding. Asp-275 contributes to the Mg(2+) binding site. Residue 319 to 321 (ESQ) coordinates substrate. The ATP site is built by Asp-504 and Gly-541. Asn-542 serves as a coordination point for Mg(2+). Position 544 (Ser-544) interacts with substrate.

This sequence belongs to the FGAMS family. Monomer. Part of the FGAM synthase complex composed of 1 PurL, 1 PurQ and 2 PurS subunits.

The protein localises to the cytoplasm. It catalyses the reaction N(2)-formyl-N(1)-(5-phospho-beta-D-ribosyl)glycinamide + L-glutamine + ATP + H2O = 2-formamido-N(1)-(5-O-phospho-beta-D-ribosyl)acetamidine + L-glutamate + ADP + phosphate + H(+). It functions in the pathway purine metabolism; IMP biosynthesis via de novo pathway; 5-amino-1-(5-phospho-D-ribosyl)imidazole from N(2)-formyl-N(1)-(5-phospho-D-ribosyl)glycinamide: step 1/2. In terms of biological role, part of the phosphoribosylformylglycinamidine synthase complex involved in the purines biosynthetic pathway. Catalyzes the ATP-dependent conversion of formylglycinamide ribonucleotide (FGAR) and glutamine to yield formylglycinamidine ribonucleotide (FGAM) and glutamate. The FGAM synthase complex is composed of three subunits. PurQ produces an ammonia molecule by converting glutamine to glutamate. PurL transfers the ammonia molecule to FGAR to form FGAM in an ATP-dependent manner. PurS interacts with PurQ and PurL and is thought to assist in the transfer of the ammonia molecule from PurQ to PurL. The sequence is that of Phosphoribosylformylglycinamidine synthase subunit PurL from Lactococcus lactis subsp. cremoris (strain SK11).